A 242-amino-acid polypeptide reads, in one-letter code: Tryptophan synthase alpha chain (242 aa).

Residues Glu-31 and Asp-42 each act as proton acceptor in the active site.

The protein belongs to the TrpA family. In terms of assembly, tetramer of two alpha and two beta chains.

The enzyme catalyses (1S,2R)-1-C-(indol-3-yl)glycerol 3-phosphate + L-serine = D-glyceraldehyde 3-phosphate + L-tryptophan + H2O. The protein operates within amino-acid biosynthesis; L-tryptophan biosynthesis; L-tryptophan from chorismate: step 5/5. Functionally, the alpha subunit is responsible for the aldol cleavage of indoleglycerol phosphate to indole and glyceraldehyde 3-phosphate. The protein is Tryptophan synthase alpha chain of Staphylococcus aureus (strain MRSA252).